The following is a 132-amino-acid chain: MVMSDPIADLLTRIRNANVVRHEVVEVPSSNIKKAIANIMLTEGYIRDLEEYRDGSVDMLRISMKYGQNKERIITGLKRISKPGLRVYCRKDETPKVLNGLGVAVVSTSKGIVTDREARKLGVGGEVLCYIW.

Belongs to the universal ribosomal protein uS8 family. Part of the 30S ribosomal subunit. Contacts proteins S5 and S12.

Functionally, one of the primary rRNA binding proteins, it binds directly to 16S rRNA central domain where it helps coordinate assembly of the platform of the 30S subunit. The chain is Small ribosomal subunit protein uS8 from Clostridium botulinum (strain 657 / Type Ba4).